Consider the following 184-residue polypeptide: Adenine phosphoribosyltransferase (184 aa).

Belongs to the purine/pyrimidine phosphoribosyltransferase family. In terms of assembly, homodimer.

It is found in the cytoplasm. It catalyses the reaction AMP + diphosphate = 5-phospho-alpha-D-ribose 1-diphosphate + adenine. The protein operates within purine metabolism; AMP biosynthesis via salvage pathway; AMP from adenine: step 1/1. In terms of biological role, catalyzes a salvage reaction resulting in the formation of AMP, that is energically less costly than de novo synthesis. In Acidovorax sp. (strain JS42), this protein is Adenine phosphoribosyltransferase.